A 414-amino-acid chain; its full sequence is 11-beta-hydroxysteroid dehydrogenase type 2 (414 aa).

The next 4 helical transmembrane spans lie at 3 to 23, 26 to 46, 52 to 72, and 341 to 361; these read DFAVSFWIYIGVMSIFVGGAV, FLAFNIGAMPSVVVWLGATLL, ALCMPAVLARLVLCVCCWLYF, and YYAGPGLILMYFICSYLPLSI. The tract at residues 382 to 414 is disordered; the sequence is KQQGLSPNDNNNSIKENMNDSSSNNSNFTKCID. Residues 384-397 are compositionally biased toward polar residues; the sequence is QGLSPNDNNNSIKE.

Belongs to the short-chain dehydrogenases/reductases (SDR) family. Broadly expressed in peripheral (brain, gill, eye, heart, liver, head kidney, posterior kidney, and gut).

The protein resides in the membrane. The enzyme catalyses an 11beta-hydroxysteroid + NAD(+) = an 11-oxosteroid + NADH + H(+). The catalysed reaction is cortisol + NAD(+) = cortisone + NADH + H(+). It catalyses the reaction corticosterone + NAD(+) = 11-dehydrocorticosterone + NADH + H(+). It carries out the reaction 11beta,17beta-dihydroxyandrost-4-ene-3-one + NAD(+) = 17beta-hydroxyandrost-4-ene-3,11-dione + NADH + H(+). The enzyme catalyses 11beta-hydroxyandrost-4-ene-3,17-dione + NAD(+) = androst-4-ene-3,11,17-trione + NADH + H(+). It functions in the pathway steroid metabolism. Functionally, catalyzes the conversion of biologically active 11beta-hydroxyglucocorticoids (11beta-hydroxysteroid) such as cortisol, to inactive 11-ketoglucocorticoids (11-oxosteroid) such as cortisone, in the presence of NAD(+). Cortisol is the primary glucocorticoid in teleosts and is released to increase glucose bioavailability in order to meet the increased energy demands in response to stress. Functions as a dehydrogenase (oxidase), thereby decreasing the concentration of active glucocorticoids, regulating the hypothalamus-pituitary-interrenal (HPI) axis function in adult fish. Decreasing the excess glucocorticoids may be of relevance to brain function and neural proliferation. Plays a key role by catalyzing the oxidation of 11beta-hydroxytestosterone (11beta,17beta-dihydroxyandrost-4-ene-3-one) to 11-ketotestosterone (17beta-hydroxyandrost-4-ene-3,11-dione), the major fish androgen, that activates androgen receptor transcriptional activity. Catalyzes the conversion of 11beta-hydroxyandrostenedione (11beta-hydroxyandrost-4-ene-3,17-dione) to 11-ketoandrostenedione (androst-4-ene-3,11,17-trione), which can be further metabolized to 11-ketotestosterone. Exerts a dual role in fish by inactivating glucocorticoids and activating androgens. The chain is 11-beta-hydroxysteroid dehydrogenase type 2 (hsd11b2) from Danio rerio (Zebrafish).